The chain runs to 302 residues: uncharacterized protein (302 aa).

The region spanning 1 to 60 (MRMNMSDFATFFAVARNQSFRAAGDELGLSSSAISHSIKTLEQRLKIRLFNRTTRSVSLT) is the HTH lysR-type domain. Residues 20 to 40 (FRAAGDELGLSSSAISHSIKT) constitute a DNA-binding region (H-T-H motif).

The protein belongs to the LysR transcriptional regulatory family.

This is an uncharacterized protein from Escherichia coli (strain K12).